A 408-amino-acid polypeptide reads, in one-letter code: Tyrosine--tRNA ligase (408 aa).

Residue Y35 coordinates L-tyrosine. The 'HIGH' region signature appears at 40–49; it reads PTADSLHVGH. Residues Y168 and Q172 each contribute to the L-tyrosine site. The 'KMSKS' region signature appears at 228-232; it reads KMGKT. K231 is an ATP binding site. Residues 342–407 form the S4 RNA-binding domain; sequence INIIDLLLKT…GKKTYHRVKL (66 aa).

Belongs to the class-I aminoacyl-tRNA synthetase family. TyrS type 1 subfamily. Homodimer.

The protein localises to the cytoplasm. It carries out the reaction tRNA(Tyr) + L-tyrosine + ATP = L-tyrosyl-tRNA(Tyr) + AMP + diphosphate + H(+). Its function is as follows. Catalyzes the attachment of tyrosine to tRNA(Tyr) in a two-step reaction: tyrosine is first activated by ATP to form Tyr-AMP and then transferred to the acceptor end of tRNA(Tyr). The sequence is that of Tyrosine--tRNA ligase from Acetivibrio thermocellus (strain ATCC 27405 / DSM 1237 / JCM 9322 / NBRC 103400 / NCIMB 10682 / NRRL B-4536 / VPI 7372) (Clostridium thermocellum).